The sequence spans 225 residues: UPF0758 protein NGK_1225 (225 aa).

Positions 102 to 224 (TLSDPDTVAD…VRSFRQLGLM (123 aa)) constitute an MPN domain. Positions 173, 175, and 186 each coordinate Zn(2+). The JAMM motif motif lies at 173-186 (HNHPGGSPEPSQED).

This sequence belongs to the UPF0758 family.

The protein is UPF0758 protein NGK_1225 of Neisseria gonorrhoeae (strain NCCP11945).